The primary structure comprises 202 residues: MKDKDIKEEVLKEEINKEVNEELKNEEVKEETHEHEHKHGGHTCCGKHGHKHNDEEIGKLKAEIEEWKNEYLRKQADFQNFTKRKEKEVDELKKFASEKIITQFLGSLDNLERAIESSIESKDFDSLLKGIEMIVRNLKDIMSAEGVEEIKTEGVYDPVYHHAVGVEANEDFKEDEIVKVLQKGYMMKGKVIRPAMVIVCKK.

A compositionally biased stretch (basic and acidic residues) spans Glu-21–His-37. Residues Glu-21 to His-52 form a disordered region. Basic residues predominate over residues Lys-38–Lys-51.

This sequence belongs to the GrpE family. In terms of assembly, homodimer.

The protein localises to the cytoplasm. Participates actively in the response to hyperosmotic and heat shock by preventing the aggregation of stress-denatured proteins, in association with DnaK and GrpE. It is the nucleotide exchange factor for DnaK and may function as a thermosensor. Unfolded proteins bind initially to DnaJ; upon interaction with the DnaJ-bound protein, DnaK hydrolyzes its bound ATP, resulting in the formation of a stable complex. GrpE releases ADP from DnaK; ATP binding to DnaK triggers the release of the substrate protein, thus completing the reaction cycle. Several rounds of ATP-dependent interactions between DnaJ, DnaK and GrpE are required for fully efficient folding. In Fusobacterium nucleatum subsp. polymorphum (Fusobacterium polymorphum), this protein is Protein GrpE.